The following is a 549-amino-acid chain: Chaperonin GroEL (549 aa).

ATP-binding positions include 29-32 (TAGP), Lys-50, 86-90 (DGTTT), Gly-417, and Asp-499.

It belongs to the chaperonin (HSP60) family. Forms a cylinder of 14 subunits composed of two heptameric rings stacked back-to-back. Interacts with the co-chaperonin GroES.

The protein resides in the cytoplasm. It catalyses the reaction ATP + H2O + a folded polypeptide = ADP + phosphate + an unfolded polypeptide.. In terms of biological role, together with its co-chaperonin GroES, plays an essential role in assisting protein folding. The GroEL-GroES system forms a nano-cage that allows encapsulation of the non-native substrate proteins and provides a physical environment optimized to promote and accelerate protein folding. The chain is Chaperonin GroEL from Anaplasma marginale (strain Florida).